Here is a 567-residue protein sequence, read N- to C-terminus: DNA ligase B (567 aa).

The N6-AMP-lysine intermediate role is filled by lysine 132.

It belongs to the NAD-dependent DNA ligase family. LigB subfamily.

The catalysed reaction is NAD(+) + (deoxyribonucleotide)n-3'-hydroxyl + 5'-phospho-(deoxyribonucleotide)m = (deoxyribonucleotide)n+m + AMP + beta-nicotinamide D-nucleotide.. Its function is as follows. Catalyzes the formation of phosphodiester linkages between 5'-phosphoryl and 3'-hydroxyl groups in double-stranded DNA using NAD as a coenzyme and as the energy source for the reaction. The polypeptide is DNA ligase B (Yersinia pestis bv. Antiqua (strain Angola)).